Consider the following 55-residue polypeptide: Lantibiotic nisin-U (55 aa).

The propeptide occupies 1–24 (MNNEDFNLDLIKISKENNSGASPR). At Thr26 the chain carries 2,3-didehydrobutyrine. The lanthionine (Ser-Cys) cross-link spans 27–31 (SKSLC). At Ser29 the chain carries 2,3-didehydroalanine (Ser). Cross-links (beta-methyllanthionine (Thr-Cys)) lie at residues 32-35 (TPGC), 37-43 (TGILMTC), 47-50 (TATC), and 49-52 (TCGC). Thr42 is subject to 2,3-didehydrobutyrine.

Maturation of lantibiotics involves the enzymatic conversion of Thr, and Ser into dehydrated AA and the formation of thioether bonds with cysteine. This is followed by membrane translocation and cleavage of the modified precursor.

It is found in the secreted. Functionally, lanthionine-containing peptide antibiotic (lantibiotic) active on Gram-positive bacteria. The bactericidal activity of lantibiotics is based on depolarization of energized bacterial cytoplasmic membranes, initiated by the formation of aqueous transmembrane pores. The protein is Lantibiotic nisin-U (nsuA) of Streptococcus uberis.